Here is a 646-residue protein sequence, read N- to C-terminus: Probable DNA helicase MCM9 (646 aa).

A C4-type zinc finger spans residues 155–188 (CRKCKHMFPIFPELESINSIVKPPFCPSQRSKAC). The MCM domain occupies 308–511 (GRNAILRGIC…EWDAVVSSHI (204 aa)). 358-365 (GDPGTGKS) provides a ligand contact to ATP. The Arginine finger motif lies at 487–490 (SRFD).

This sequence belongs to the MCM family.

The protein localises to the nucleus. The catalysed reaction is ATP + H2O = ADP + phosphate + H(+). Functionally, probable DNA helicase that may play a role in DNA repair during meiosis. In Arabidopsis thaliana (Mouse-ear cress), this protein is Probable DNA helicase MCM9 (MCM9).